The primary structure comprises 495 residues: Meiosis-specific nuclear structural protein 1 (495 aa).

The interval 1-315 (MASIRRTLSF…RLEEMLRQRE (315 aa)) is interaction with BBOF1. 2 coiled-coil regions span residues 61–215 (QDEQ…EKLM) and 245–361 (IEEF…QMAL). The interval 172-199 (EESAAEDKRNQAKAQYSHDLEKQLEEQG) is disordered.

Belongs to the MNS1 family. Able to form oligomers. Microtubule inner protein component of sperm flagellar doublet microtubules. Interacts with ODAD1. Interacts with BBOF1. In terms of tissue distribution, expressed in trachea multiciliated cells.

The protein localises to the nucleus. It localises to the cytoplasm. Its subcellular location is the cytoskeleton. The protein resides in the cilium axoneme. It is found in the flagellum axoneme. In terms of biological role, microtubule inner protein (MIP) part of the dynein-decorated doublet microtubules (DMTs) in cilia axoneme, which is required for motile cilia beating. May play a role in the control of meiotic division and germ cell differentiation through regulation of pairing and recombination during meiosis. Required for sperm flagella assembly. May play a role in the assembly and function of the outer dynein arm-docking complex (ODA-DC). ODA-DC mediates outer dynein arms (ODA) binding onto the axonemal doublet microtubules. This is Meiosis-specific nuclear structural protein 1 (MNS1) from Bos taurus (Bovine).